The following is a 137-amino-acid chain: Glutaredoxin-C9 (137 aa).

Residues G32–W136 form the Glutaredoxin domain. C52 and C55 are oxidised to a cystine. A Responsive for interaction with TGA factors motif is present at residues A134–L137.

The protein belongs to the glutaredoxin family. CC-type subfamily. Interacts with TGA2 and TGA6.

The protein resides in the cytoplasm. The protein localises to the nucleus. Has a glutathione-disulfide oxidoreductase activity in the presence of NADPH and glutathione reductase. Reduces low molecular weight disulfides and proteins. The protein is Glutaredoxin-C9 (GRXC9) of Arabidopsis thaliana (Mouse-ear cress).